The sequence spans 238 residues: MASYTVSFIPLTLSNPRIFVSRQNGSPSSSSRIPLTSSLLGKKLLATQPSHRCFVPKLRCLTSASTVLNVPIAQPENGSSDKIPKWSARAIKSLAMGELEARKLKYPSTGTEAILMGILVEGTSTVAKFLRGNGVTLFKVRDETLSLLGKSDMYFFSPEHPPLTEPAQKAIAWAIDEKNKSDVDGELTTAYLLLGVWSQKDSAGRQILEKLGFNEDKAKEVEKSMNEDVDLSFKKQGQ.

A chloroplast-targeting transit peptide spans 1–64 (MASYTVSFIP…VPKLRCLTSA (64 aa)). The 146-residue stretch at 83–228 (IPKWSARAIK…KEVEKSMNED (146 aa)) folds into the Clp R domain. 2 repeat regions span residues 86–151 (WSAR…LGKS) and 163–228 (LTEP…MNED).

It belongs to the ClpA/ClpB family. Monomer and homodimer. Binds to the CLP3-6 ring (P-ring). The dimers monomerize before association to the P-ring. Component of the chloroplastic Clp protease core complex which consist of at least 16 proteins: CLPP4 (3 copies), CLPP5 (3 copies), CLPR4 (2 copies), ClpP1 (1 copy), CLPP6 (1 copy), CLPR2 (1 copy), CLPT1 (1 copy), CLPT2 (1 copy) and 3 copies of CLPP3 and/or CLPR1 and/or CLPR3. Interacts with CLPC2 and CLPD. Interacts with CPN21. No interactions with CLPS1.

The protein resides in the plastid. It localises to the chloroplast. Functionally, accessory protein regulating the assembly of the plastidial Clp protease system. CLPT1 first binds to the heptameric P-ring containing the CLP3-6 subunits followed by CLPT2, and only then does the P-ring combine with the R-ring composed of the clpP1 and CLPR1-4 subunits. Once the core complex is fully assembled, it then associates to the CLPC chaperone partner to form the functional protease. CLPT1 and CLPT2 are partially redundant. The protein is ATP-dependent Clp protease ATP-binding subunit CLPT1, chloroplastic of Arabidopsis thaliana (Mouse-ear cress).